The following is a 556-amino-acid chain: Protein misato homolog 1 (556 aa).

A Phosphoserine modification is found at S41.

Belongs to the misato family.

It localises to the mitochondrion outer membrane. The protein resides in the cytoplasm. Involved in the regulation of mitochondrial distribution and morphology. Required for mitochondrial fusion and mitochondrial network formation. This is Protein misato homolog 1 (Msto1) from Mus musculus (Mouse).